The chain runs to 620 residues: Probable potassium transport system protein Kup (620 aa).

12 helical membrane-spanning segments follow: residues 11-31, 51-71, 100-120, 138-158, 167-187, 202-222, 246-266, 288-308, 334-354, 364-384, 396-416, and 418-438; these read LAFL…LYAF, ILSL…LLLV, IAML…VITP, LAPY…AVQA, FFAP…AHAI, AVHF…LVVL, WFAL…AYLL, LILL…SGIF, GQIY…FVML, AAYG…LVLV, VVTI…STST, and LMEG…VMYI.

It belongs to the HAK/KUP transporter (TC 2.A.72) family.

It localises to the cell inner membrane. The catalysed reaction is K(+)(in) + H(+)(in) = K(+)(out) + H(+)(out). In terms of biological role, transport of potassium into the cell. Likely operates as a K(+):H(+) symporter. The chain is Probable potassium transport system protein Kup from Vibrio cholerae serotype O1 (strain ATCC 39541 / Classical Ogawa 395 / O395).